Reading from the N-terminus, the 780-residue chain is Mediator of RNA polymerase II transcription subunit 15 (780 aa).

The interaction with nhr-49 stretch occupies residues 1-124 (MSEEDWPSPK…PQPTSAQARN (124 aa)). The tract at residues 2 to 96 (SEEDWPSPKF…SPPCTTAALL (95 aa)) is interaction with sbp-1. 3 disordered regions span residues 91–152 (TTAA…APSA), 166–363 (PSPD…QGMM), and 564–597 (GPGPIGRDRNSMSGSSMSGPSSGAPSMNPMGTPN). A compositionally biased stretch (low complexity) spans 125-139 (PPVTVATTQASTTPS). Over residues 225–245 (PPNGYGGYGMMNGPPGSGAPM) the composition is skewed to gly residues. The segment covering 296 to 316 (QGATPTGPSSVLESLINQPQQ) has biased composition (polar residues). Composition is skewed to low complexity over residues 333–353 (AAQRAAAQQQQQQQQQQQQQR) and 574–594 (SMSGSSMSGPSSGAPSMNPMG).

The protein belongs to the Mediator complex subunit 15 family. In terms of assembly, component of the Mediator complex. Interacts with nhr-49, nhr-64 and sbp-1. Expressed in the intestine and head neurons.

It is found in the nucleus. Component of the Mediator complex, a coactivator involved in regulated gene transcription of nearly all RNA polymerase II-dependent genes. Mediator functions as a bridge to convey information from gene-specific regulatory proteins to the basal RNA polymerase II transcription machinery. Mediator is recruited to promoters by direct interactions with regulatory proteins and serves as a scaffold for the assembly of a functional preinitiation complex with RNA polymerase II and the general transcription factors. Required for regulated expression of genes controlling fatty acid desaturation by transcription factors including sbp-1 and nhr-49. Involved in the response to simulated microgravity, in concert with sbp-1, probably acting in the intestine. The sequence is that of Mediator of RNA polymerase II transcription subunit 15 (mdt-15) from Caenorhabditis elegans.